The primary structure comprises 376 residues: MYKLLKKSGKARRGEFTTPHGVIQTPVFMNVGTLAAIKGAVSSMDLKEIGCQVELSNTYHLHLRPGDEVVKKMGGLHKFMNWDRPILTDSGGFQVFSLSKIRKIQEEGVYFNSHIDGRKIFMGPEESMRIQSNLASTIAMAFDECVENPAPREYVEKSVERTTRWLHRCKDEMNRLNSLPDTINNKQMLFGINQGGTYEDIRIEHAKTIAKMDLDGYAIGGLAVGESHEDMYRIIDAVVPHLPEDKPIYLMGVGIPSNILEAVDRGVDFFDCVLPARNGRHAHVFTKEGKINLLNAKFELDDRPIDEGCQCPACKHYTRSYIRHLFKAKEMLAMRLCVLHNLYFYNNLMEEIRDAIDGDYFKEYKERKLKEWGGRA.

D89 functions as the Proton acceptor in the catalytic mechanism. Substrate is bound by residues 89–93 (DSGGF), D143, Q194, and G221. An RNA binding region spans residues 252-258 (GVGIPSN). D271 acts as the Nucleophile in catalysis. Residues 276–280 (ARNGR) form an RNA binding; important for wobble base 34 recognition region. Residues C309, C311, C314, and H340 each contribute to the Zn(2+) site.

Belongs to the queuine tRNA-ribosyltransferase family. In terms of assembly, homodimer. Within each dimer, one monomer is responsible for RNA recognition and catalysis, while the other monomer binds to the replacement base PreQ1. Requires Zn(2+) as cofactor.

It catalyses the reaction 7-aminomethyl-7-carbaguanine + guanosine(34) in tRNA = 7-aminomethyl-7-carbaguanosine(34) in tRNA + guanine. Its pathway is tRNA modification; tRNA-queuosine biosynthesis. Functionally, catalyzes the base-exchange of a guanine (G) residue with the queuine precursor 7-aminomethyl-7-deazaguanine (PreQ1) at position 34 (anticodon wobble position) in tRNAs with GU(N) anticodons (tRNA-Asp, -Asn, -His and -Tyr). Catalysis occurs through a double-displacement mechanism. The nucleophile active site attacks the C1' of nucleotide 34 to detach the guanine base from the RNA, forming a covalent enzyme-RNA intermediate. The proton acceptor active site deprotonates the incoming PreQ1, allowing a nucleophilic attack on the C1' of the ribose to form the product. After dissociation, two additional enzymatic reactions on the tRNA convert PreQ1 to queuine (Q), resulting in the hypermodified nucleoside queuosine (7-(((4,5-cis-dihydroxy-2-cyclopenten-1-yl)amino)methyl)-7-deazaguanosine). This is Queuine tRNA-ribosyltransferase from Clostridium botulinum (strain Kyoto / Type A2).